The primary structure comprises 88 residues: Small ribosomal subunit protein uS15 (88 aa).

This sequence belongs to the universal ribosomal protein uS15 family. As to quaternary structure, part of the 30S ribosomal subunit. Forms a bridge to the 50S subunit in the 70S ribosome, contacting the 23S rRNA.

Functionally, one of the primary rRNA binding proteins, it binds directly to 16S rRNA where it helps nucleate assembly of the platform of the 30S subunit by binding and bridging several RNA helices of the 16S rRNA. In terms of biological role, forms an intersubunit bridge (bridge B4) with the 23S rRNA of the 50S subunit in the ribosome. In Desulfitobacterium hafniense (strain Y51), this protein is Small ribosomal subunit protein uS15.